The chain runs to 345 residues: Adenine deaminase (345 aa).

The Zn(2+) site is built by His24, His26, and His204. Residue Glu207 is the Proton donor of the active site. Position 285 (Asp285) interacts with Zn(2+). A substrate-binding site is contributed by Asp286.

The protein belongs to the metallo-dependent hydrolases superfamily. Adenosine and AMP deaminases family. Adenine deaminase type 2 subfamily. Zn(2+) serves as cofactor.

It catalyses the reaction adenine + H2O + H(+) = hypoxanthine + NH4(+). Catalyzes the hydrolytic deamination of adenine to hypoxanthine. Plays an important role in the purine salvage pathway and in nitrogen catabolism. The protein is Adenine deaminase of Albidiferax ferrireducens (strain ATCC BAA-621 / DSM 15236 / T118) (Rhodoferax ferrireducens).